The sequence spans 176 residues: NAD(P)H-quinone oxidoreductase subunit 6, chloroplastic (176 aa).

Transmembrane regions (helical) follow at residues 10-30 (FLLV…VLLP), 32-52 (PIYS…FYIL), 61-81 (AQLL…VMFM), 92-112 (LWTV…ISLI), and 152-172 (FFLP…GAIA).

This sequence belongs to the complex I subunit 6 family. In terms of assembly, NDH is composed of at least 16 different subunits, 5 of which are encoded in the nucleus.

The protein localises to the plastid. It localises to the chloroplast thylakoid membrane. The enzyme catalyses a plastoquinone + NADH + (n+1) H(+)(in) = a plastoquinol + NAD(+) + n H(+)(out). The catalysed reaction is a plastoquinone + NADPH + (n+1) H(+)(in) = a plastoquinol + NADP(+) + n H(+)(out). In terms of biological role, NDH shuttles electrons from NAD(P)H:plastoquinone, via FMN and iron-sulfur (Fe-S) centers, to quinones in the photosynthetic chain and possibly in a chloroplast respiratory chain. The immediate electron acceptor for the enzyme in this species is believed to be plastoquinone. Couples the redox reaction to proton translocation, and thus conserves the redox energy in a proton gradient. This chain is NAD(P)H-quinone oxidoreductase subunit 6, chloroplastic (ndhG), found in Solanum lycopersicum (Tomato).